The sequence spans 433 residues: Vesicle-associated protein (433 aa).

Repeat copies occupy residues 112–122 (GGGIGGGLGGG) and 219–229 (GGGIGGGLGGG). The segment at 112-350 (GGGIGGGLGG…GGIGGGLGGG (239 aa)) is 3 X 11 AA repeats of G-G-G-I-G-G-G-L-G-G-G. Positions 266-274 (VDGKKKGKG) match the Nuclear localization signal motif. Repeat 3 spans residues 340-350 (GGGIGGGLGGG). Disordered regions lie at residues 366–389 (RVGGDISGPDLDVSGPDLDIDGDG) and 411–433 (HGKGDIDVDADVDIERPDLNVSG). A compositionally biased stretch (basic and acidic residues) spans 423–433 (DIERPDLNVSG).

Egg cortex.

Its subcellular location is the microsome membrane. It localises to the nucleus. The protein resides in the endoplasmic reticulum membrane. Functionally, may function as a multidomain RNA-binding protein. May play a role in nuclear RNA processing and in early development. The chain is Vesicle-associated protein (VAP-1) from Strongylocentrotus purpuratus (Purple sea urchin).